The primary structure comprises 218 residues: Ribose-5-phosphate isomerase A (218 aa).

Residues 28–31 (TGST), 81–84 (DSAD), and 94–97 (KGGG) contribute to the substrate site. The active-site Proton acceptor is the Glu-103. Lys-121 is a binding site for substrate.

Belongs to the ribose 5-phosphate isomerase family. As to quaternary structure, homodimer.

It carries out the reaction aldehydo-D-ribose 5-phosphate = D-ribulose 5-phosphate. It participates in carbohydrate degradation; pentose phosphate pathway; D-ribose 5-phosphate from D-ribulose 5-phosphate (non-oxidative stage): step 1/1. Catalyzes the reversible conversion of ribose-5-phosphate to ribulose 5-phosphate. In Buchnera aphidicola subsp. Baizongia pistaciae (strain Bp), this protein is Ribose-5-phosphate isomerase A.